Consider the following 553-residue polypeptide: CTP synthase (553 aa).

The segment at 1–277 (MPTEPETDYD…DQYVMEELDI (277 aa)) is amidoligase domain. Ser-26 lines the CTP pocket. Residue Ser-26 participates in UTP binding. ATP is bound by residues 27 to 32 (GLGKGI) and Asp-84. The Mg(2+) site is built by Asp-84 and Glu-152. CTP-binding positions include 159 to 161 (DIE), 198 to 203 (KTKPTQ), and Lys-234. UTP contacts are provided by residues 198-203 (KTKPTQ) and Lys-234. Val-252 contacts ATP. One can recognise a Glutamine amidotransferase type-1 domain in the interval 307-544 (LVGKYDLEDA…LEAVLGDDPH (238 aa)). Residue Gly-364 participates in L-glutamine binding. Cys-391 acts as the Nucleophile; for glutamine hydrolysis in catalysis. Residues 392-395 (LGFQ), Glu-415, and Arg-472 each bind L-glutamine. Catalysis depends on residues His-517 and Glu-519.

This sequence belongs to the CTP synthase family. As to quaternary structure, homotetramer.

Its subcellular location is the cytoplasm. The enzyme catalyses UTP + L-glutamine + ATP + H2O = CTP + L-glutamate + ADP + phosphate + 2 H(+). It carries out the reaction L-glutamine + H2O = L-glutamate + NH4(+). The catalysed reaction is UTP + NH4(+) + ATP = CTP + ADP + phosphate + 2 H(+). It participates in pyrimidine metabolism; CTP biosynthesis via de novo pathway; CTP from UDP: step 2/2. With respect to regulation, allosterically activated by GTP, when glutamine is the substrate; GTP has no effect on the reaction when ammonia is the substrate. The allosteric effector GTP functions by stabilizing the protein conformation that binds the tetrahedral intermediate(s) formed during glutamine hydrolysis. Inhibited by the product CTP, via allosteric rather than competitive inhibition. Inhibited by 6-diazo-5-oxo-l-norleucine (DON). Its function is as follows. Catalyzes the ATP-dependent amination of UTP to CTP with either L-glutamine or ammonia as the source of nitrogen. Regulates intracellular CTP levels through interactions with the four ribonucleotide triphosphates. In Haloarcula hispanica (strain ATCC 33960 / DSM 4426 / JCM 8911 / NBRC 102182 / NCIMB 2187 / VKM B-1755), this protein is CTP synthase.